The sequence spans 500 residues: Lysine--tRNA ligase (500 aa).

The Mg(2+) site is built by glutamate 410 and glutamate 417.

Belongs to the class-II aminoacyl-tRNA synthetase family. Homodimer. The cofactor is Mg(2+).

It is found in the cytoplasm. It catalyses the reaction tRNA(Lys) + L-lysine + ATP = L-lysyl-tRNA(Lys) + AMP + diphosphate. The chain is Lysine--tRNA ligase from Shewanella sediminis (strain HAW-EB3).